Reading from the N-terminus, the 66-residue chain is Phylloseptin-S3 (66 aa).

The first 22 residues, 1-22 (MAFLKKSLFLVLFLGLVSLSIC), serve as a signal peptide directing secretion. Residues 23–46 (EEEKRETEEEEHDQEEDDKSEEKR) constitute a propeptide that is removed on maturation. The segment at 25–44 (EKRETEEEEHDQEEDDKSEE) is disordered. A compositionally biased stretch (acidic residues) spans 30–41 (EEEEHDQEEDDK). Phe65 carries the phenylalanine amide modification.

Belongs to the frog skin active peptide (FSAP) family. Phylloseptin subfamily. Expressed by the skin glands.

The protein localises to the secreted. Its subcellular location is the target cell membrane. Functionally, antimicrobial peptide with activity against the Gram-positive S.pyogenes (MIC=12.5 uM), but not against all other bacteria tested (both Gram-positive and Gram-negative). Does not show activity against fungi, and against Leishmania species. This is Phylloseptin-S3 from Phyllomedusa sauvagei (Sauvage's leaf frog).